A 708-amino-acid chain; its full sequence is Leukotoxin translocation ATP-binding protein LktB (708 aa).

In terms of domain architecture, Peptidase C39 spans 1–126 (MEANHQRNDL…ACYQGQLILV (126 aa)). The 283-residue stretch at 155–437 (FLETLIVSIF…LAQLWQDFQQ (283 aa)) folds into the ABC transmembrane type-1 domain. 5 consecutive transmembrane segments (helical) span residues 159 to 179 (LIVS…FQVV), 192 to 212 (LNII…LSGL), 270 to 290 (ALTS…MWYY), 296 to 316 (LVIL…SPIL), and 389 to 409 (VMVI…LSIG). Residues 469-704 (IAFKNIRFRY…SNGLYSYLHQ (236 aa)) form the ABC transporter domain. Residue 503-510 (GRSGSGKS) participates in ATP binding.

The protein belongs to the ABC transporter superfamily. Protein-1 exporter (TC 3.A.1.109) family. Homodimer.

Its subcellular location is the cell inner membrane. The enzyme catalyses ATP + H2O + proteinSide 1 = ADP + phosphate + proteinSide 2.. Its function is as follows. Part of the ABC transporter complex LktBD involved in leukotoxin export. Transmembrane domains (TMD) form a pore in the inner membrane and the ATP-binding domain (NBD) is responsible for energy generation. The protein is Leukotoxin translocation ATP-binding protein LktB (lktB) of Mannheimia glucosida.